A 502-amino-acid polypeptide reads, in one-letter code: ATP synthase subunit alpha, sodium ion specific (502 aa).

Residue 169–176 participates in ATP binding; that stretch reads GDRQTGKT.

This sequence belongs to the ATPase alpha/beta chains family. As to quaternary structure, F-type ATPases have 2 components, CF(1) - the catalytic core - and CF(0) - the membrane proton channel. CF(1) has five subunits: alpha(3), beta(3), gamma(1), delta(1), epsilon(1). CF(0) has three main subunits: a, b and c.

The protein localises to the cell membrane. It catalyses the reaction 4 Na(+)(in) + ATP + H2O = 4 Na(+)(out) + ADP + phosphate + H(+). Its activity is regulated as follows. Inhibited by nitrate. In terms of biological role, produces ATP from ADP in the presence of a sodium ion gradient across the membrane. The alpha chain is a regulatory subunit. This Acetobacterium woodii (strain ATCC 29683 / DSM 1030 / JCM 2381 / KCTC 1655 / WB1) protein is ATP synthase subunit alpha, sodium ion specific.